A 428-amino-acid chain; its full sequence is Adenylosuccinate synthetase (428 aa).

Residues 12–18 (GDEGKGK) and 40–42 (GHT) contribute to the GTP site. The active-site Proton acceptor is the aspartate 13. Mg(2+) is bound by residues aspartate 13 and glycine 40. IMP-binding positions include 13-16 (DEGK), 38-41 (NAGH), threonine 128, arginine 142, glutamine 222, threonine 237, and arginine 301. The active-site Proton donor is the histidine 41. 297 to 303 (TVTGRSR) is a binding site for substrate. Residues arginine 303, 329 to 331 (KLD), and 411 to 413 (STS) each bind GTP.

This sequence belongs to the adenylosuccinate synthetase family. Homodimer. Mg(2+) serves as cofactor.

It is found in the cytoplasm. The catalysed reaction is IMP + L-aspartate + GTP = N(6)-(1,2-dicarboxyethyl)-AMP + GDP + phosphate + 2 H(+). It functions in the pathway purine metabolism; AMP biosynthesis via de novo pathway; AMP from IMP: step 1/2. Its function is as follows. Plays an important role in the de novo pathway of purine nucleotide biosynthesis. Catalyzes the first committed step in the biosynthesis of AMP from IMP. This Phenylobacterium zucineum (strain HLK1) protein is Adenylosuccinate synthetase.